A 290-amino-acid polypeptide reads, in one-letter code: Pantothenate synthetase (290 aa).

34–41 is an ATP binding site; it reads MGNLHDGH. Catalysis depends on H41, which acts as the Proton donor. Residue Q65 participates in (R)-pantoate binding. Q65 is a beta-alanine binding site. 156–159 is an ATP binding site; that stretch reads GKKD. Q162 contacts (R)-pantoate. ATP-binding positions include A185 and 193-196; that span reads LSSR.

The protein belongs to the pantothenate synthetase family. Homodimer.

It is found in the cytoplasm. It catalyses the reaction (R)-pantoate + beta-alanine + ATP = (R)-pantothenate + AMP + diphosphate + H(+). Its pathway is cofactor biosynthesis; (R)-pantothenate biosynthesis; (R)-pantothenate from (R)-pantoate and beta-alanine: step 1/1. Catalyzes the condensation of pantoate with beta-alanine in an ATP-dependent reaction via a pantoyl-adenylate intermediate. In Acidovorax ebreus (strain TPSY) (Diaphorobacter sp. (strain TPSY)), this protein is Pantothenate synthetase.